A 126-amino-acid polypeptide reads, in one-letter code: Large ribosomal subunit protein bL19 (126 aa).

This sequence belongs to the bacterial ribosomal protein bL19 family.

This protein is located at the 30S-50S ribosomal subunit interface and may play a role in the structure and function of the aminoacyl-tRNA binding site. This chain is Large ribosomal subunit protein bL19, found in Thiobacillus denitrificans (strain ATCC 25259 / T1).